Reading from the N-terminus, the 265-residue chain is 4-hydroxy-tetrahydrodipicolinate reductase (265 aa).

16–21 contacts NAD(+); sequence GANGKM. Position 43 (arginine 43) interacts with NADP(+). NAD(+) is bound by residues 106-108 and 130-133; these read GTT and SENF. The active-site Proton donor/acceptor is histidine 164. Histidine 165 serves as a coordination point for (S)-2,3,4,5-tetrahydrodipicolinate. The Proton donor role is filled by lysine 168. Position 174-175 (174-175) interacts with (S)-2,3,4,5-tetrahydrodipicolinate; the sequence is AT.

This sequence belongs to the DapB family. As to quaternary structure, homotetramer.

The protein resides in the cytoplasm. It catalyses the reaction (S)-2,3,4,5-tetrahydrodipicolinate + NAD(+) + H2O = (2S,4S)-4-hydroxy-2,3,4,5-tetrahydrodipicolinate + NADH + H(+). The enzyme catalyses (S)-2,3,4,5-tetrahydrodipicolinate + NADP(+) + H2O = (2S,4S)-4-hydroxy-2,3,4,5-tetrahydrodipicolinate + NADPH + H(+). The protein operates within amino-acid biosynthesis; L-lysine biosynthesis via DAP pathway; (S)-tetrahydrodipicolinate from L-aspartate: step 4/4. In terms of biological role, catalyzes the conversion of 4-hydroxy-tetrahydrodipicolinate (HTPA) to tetrahydrodipicolinate. This is 4-hydroxy-tetrahydrodipicolinate reductase from Wigglesworthia glossinidia brevipalpis.